We begin with the raw amino-acid sequence, 93 residues long: Putative membrane protein insertion efficiency factor (93 aa).

The disordered stretch occupies residues 72–93 (VPEHFPSWRGPHPKTPSRKTPE). The span at 82 to 93 (PHPKTPSRKTPE) shows a compositional bias: basic residues.

This sequence belongs to the UPF0161 family.

It is found in the cell membrane. Its function is as follows. Could be involved in insertion of integral membrane proteins into the membrane. This Deinococcus geothermalis (strain DSM 11300 / CIP 105573 / AG-3a) protein is Putative membrane protein insertion efficiency factor.